Here is a 124-residue protein sequence, read N- to C-terminus: Ribonuclease P protein component (124 aa).

This sequence belongs to the RnpA family. Consists of a catalytic RNA component (M1 or rnpB) and a protein subunit.

It carries out the reaction Endonucleolytic cleavage of RNA, removing 5'-extranucleotides from tRNA precursor.. Functionally, RNaseP catalyzes the removal of the 5'-leader sequence from pre-tRNA to produce the mature 5'-terminus. It can also cleave other RNA substrates such as 4.5S RNA. The protein component plays an auxiliary but essential role in vivo by binding to the 5'-leader sequence and broadening the substrate specificity of the ribozyme. The polypeptide is Ribonuclease P protein component (Maridesulfovibrio salexigens (strain ATCC 14822 / DSM 2638 / NCIMB 8403 / VKM B-1763) (Desulfovibrio salexigens)).